A 295-amino-acid polypeptide reads, in one-letter code: Bifunctional protein FolD (295 aa).

NADP(+) is bound by residues 175 to 177 (GVS) and isoleucine 243.

This sequence belongs to the tetrahydrofolate dehydrogenase/cyclohydrolase family. Homodimer.

It carries out the reaction (6R)-5,10-methylene-5,6,7,8-tetrahydrofolate + NADP(+) = (6R)-5,10-methenyltetrahydrofolate + NADPH. The catalysed reaction is (6R)-5,10-methenyltetrahydrofolate + H2O = (6R)-10-formyltetrahydrofolate + H(+). It participates in one-carbon metabolism; tetrahydrofolate interconversion. Catalyzes the oxidation of 5,10-methylenetetrahydrofolate to 5,10-methenyltetrahydrofolate and then the hydrolysis of 5,10-methenyltetrahydrofolate to 10-formyltetrahydrofolate. This is Bifunctional protein FolD from Xylella fastidiosa (strain 9a5c).